Here is a 414-residue protein sequence, read N- to C-terminus: Na(+)-translocating NADH-quinone reductase subunit B (414 aa).

4 helical membrane passes run 23-40, 56-76, 129-149, and 164-184; these read WFAL…PGLV, IMIM…YNAG, FLPI…LFCM, and ILFA…LGIT. Residue threonine 236 is modified to FMN phosphoryl threonine. Transmembrane regions (helical) follow at residues 268–288, 297–317, 325–345, 358–378, and 381–401; these read IPGS…AMIV, IIAG…VVGS, MPWH…FMAT, WWYG…NPAY, and GMML…HVVI.

It belongs to the NqrB/RnfD family. Composed of six subunits; NqrA, NqrB, NqrC, NqrD, NqrE and NqrF. FMN serves as cofactor.

The protein resides in the cell inner membrane. The enzyme catalyses a ubiquinone + n Na(+)(in) + NADH + H(+) = a ubiquinol + n Na(+)(out) + NAD(+). In terms of biological role, NQR complex catalyzes the reduction of ubiquinone-1 to ubiquinol by two successive reactions, coupled with the transport of Na(+) ions from the cytoplasm to the periplasm. NqrA to NqrE are probably involved in the second step, the conversion of ubisemiquinone to ubiquinol. This chain is Na(+)-translocating NADH-quinone reductase subunit B, found in Vibrio parahaemolyticus serotype O3:K6 (strain RIMD 2210633).